The sequence spans 436 residues: MNLAGQSGDAGSGHLLFANFNQDNTSLAVGSKSGYKFFSLSSVDKLEQIYECTDTEDVCIVERLFSSSLVAIVSLKAPRKLKVCHFKKGTEICNYSYSNTILAVKLNRQRLIVCLEESLYIHNIRDMKVLHTIRETPPNPAGLCALSINNDNCYLAYPGSATIGEVQVFDTINLRAANMIPAHDSPLAALAFDASGTKLATASEKGTVIRVFSIPEGQKLFEFRRGVKRCVSICSLAFSMDGMFLSASSNTETVHIFKLETVKEKPQEEPTTWTGYFGKVLMASTSYLPSQVTEMFNQGRAFATVRLPFCGHKNICALATIQKIPRLLVGAADGYLYMYNLDPQEGGECTLMKQHKLDGSMEPANEILESASHDRPLVAQTYSAAVTKGTYVPSSPTRHAYTEDLGAVGGACLEDETNSLRLDEDSEHPPMILRTD.

One copy of the WD 1 repeat lies at 182–222; sequence AHDSPLAALAFDASGTKLATASEKGTVIRVFSIPEGQKLFE. The L/FRRG motif motif lies at 223 to 226; that stretch reads FRRG. WD repeat units follow at residues 228 to 267 and 311 to 349; these read KRCVSICSLAFSMDGMFLSASSNTETVHIFKLETVKEKPQ and GHKNICALATIQKIPRLLVGAADGYLYMYNLDPQEGGEC.

Belongs to the WD repeat PROPPIN family.

It is found in the preautophagosomal structure membrane. Component of the autophagy machinery that controls the major intracellular degradation process by which cytoplasmic materials are packaged into autophagosomes and delivered to lysosomes for degradation. Involved in an early step of the formation of preautophagosomal structures. The protein is WD repeat domain phosphoinositide-interacting protein 2 (WIPI2) of Gallus gallus (Chicken).